We begin with the raw amino-acid sequence, 120 residues long: Large ribosomal subunit protein uL18 (120 aa).

It belongs to the universal ribosomal protein uL18 family. As to quaternary structure, part of the 50S ribosomal subunit; part of the 5S rRNA/L5/L18/L25 subcomplex. Contacts the 5S and 23S rRNAs.

Functionally, this is one of the proteins that bind and probably mediate the attachment of the 5S RNA into the large ribosomal subunit, where it forms part of the central protuberance. In Bacillus cereus (strain ATCC 10987 / NRS 248), this protein is Large ribosomal subunit protein uL18.